Here is an 83-residue protein sequence, read N- to C-terminus: Exodeoxyribonuclease 7 small subunit (83 aa).

Belongs to the XseB family. In terms of assembly, heterooligomer composed of large and small subunits.

It is found in the cytoplasm. It catalyses the reaction Exonucleolytic cleavage in either 5'- to 3'- or 3'- to 5'-direction to yield nucleoside 5'-phosphates.. In terms of biological role, bidirectionally degrades single-stranded DNA into large acid-insoluble oligonucleotides, which are then degraded further into small acid-soluble oligonucleotides. The sequence is that of Exodeoxyribonuclease 7 small subunit from Rhizobium meliloti (strain 1021) (Ensifer meliloti).